The chain runs to 1261 residues: Structural maintenance of chromosomes protein 3 (1261 aa).

2 coiled-coil regions span residues 188–332 (EKIQ…HSLQ) and 406–450 (LIAD…YEMD). In terms of domain architecture, SMC hinge spans 534-645 (NGYYGTVIEL…IIVRTLDQAA (112 aa)). Coiled-coil stretches lie at residues 677-826 (KRSK…MDLM), 857-930 (NERR…DKIT), and 1023-1085 (RELE…ENRK). The DA-box signature appears at 1159–1193 (LSGGQKSLVALAIIFSIQKCDPAPFYLFDEIDAAL).

Belongs to the SMC family. SMC3 subfamily. In terms of assembly, component of the cohesin complex, composed of the smc-1 and smc-3 heterodimer attached via their SMC hinge domain, scc-1 which links them, and scc-3. Interacts with scc-1, smc-1 and tim-1.

Its subcellular location is the nucleus. The protein resides in the chromosome. Its function is as follows. Involved in chromosome cohesion during cell cycle and in DNA repair. Involved in the repair of double strand breaks during mitosis and meiosis. Required for chromosome segregation during mitosis. Central component of cohesin complex. The cohesin complex is required for the cohesion of sister chromatids after DNA replication. The cohesin complex apparently forms a large proteinaceous ring within which sister chromatids can be trapped. At anaphase, the complex is cleaved and dissociates from chromatin, allowing sister chromatids to segregate. Required for the localization of lab-1 to meiotic and mitotic chromosomes. This is Structural maintenance of chromosomes protein 3 from Caenorhabditis elegans.